We begin with the raw amino-acid sequence, 455 residues long: SH3 domain-binding protein 5 (455 aa).

The segment covering 1 to 12 has biased composition (basic and acidic residues); it reads MDAALKRSRSEE. The tract at residues 1-63 is disordered; sequence MDAALKRSRS…QSTDDINRRE (63 aa). Positions 22 to 41 are enriched in acidic residues; the sequence is DEEEEEEEGMEQGLEEEEEV. A sufficient for interaction with RAB11A and for guanine nucleotide exchange activity region spans residues 31 to 265; it reads MEQGLEEEEE…EIHERRRSSA (235 aa). Over residues 42-51 the composition is skewed to basic and acidic residues; sequence DPRIQGELEK. Coiled-coil stretches lie at residues 44 to 90, 97 to 145, 154 to 200, and 211 to 255; these read RIQG…LVKK, DSKP…RLLE, AWQE…LEKK, and YFEL…MISD. Disordered stretches follow at residues 259-293 and 306-345; these read ERRRSSAMGPRGCGVGAEGSSTSVEDLPGSKPEPD and SCSNFVSEDDSETQSVSSFSSGPTSPSEMPDQFPAVVRPG. Acidic residues predominate over residues 306–317; it reads SCSNFVSEDDSE. Low complexity predominate over residues 320–332; it reads SVSSFSSGPTSPS. A Phosphoserine; by MAPK12 and MAPK9 modification is found at S351. The interval 369-435 is disordered; sequence SECSGASSPE…ALENRMKQLS (67 aa). Phosphoserine is present on residues S375 and S376. Residues 380 to 396 show a composition bias toward basic and acidic residues; sequence EVERGDRAEGAENKTSD. Over residues 403–421 the composition is skewed to low complexity; that stretch reads GLSSSSGSGGSSKSQSSTS. Phosphoserine is present on residues S418 and S421.

Belongs to the SH3BP5 family. Interacts with BTK. Interacts with all isoforms of MAPK8, MAPK9, MAPK10 and MAPK12. Interacts with GDP-bound and nucleotide-free forms of RAB11A. As to expression, highly expressed in testis and ovaries. It is also expressed in a variety of tissues including spleen, lymph node, thymus, bone marrow, fetal liver, colon, small intestine and prostate.

The protein localises to the cytoplasmic vesicle membrane. Its subcellular location is the mitochondrion. Functionally, functions as a guanine nucleotide exchange factor (GEF) with specificity for RAB11A and RAB25. Inhibits the auto- and transphosphorylation activity of BTK. Plays a negative regulatory role in BTK-related cytoplasmic signaling in B-cells. May be involved in BCR-induced apoptotic cell death. This Homo sapiens (Human) protein is SH3 domain-binding protein 5 (SH3BP5).